The sequence spans 419 residues: UPF0329 protein ECU07_1890/ECU10_0010 (419 aa).

Residues Arg-136–Ala-165 show a composition bias toward basic and acidic residues. Positions Arg-136–Gly-222 are disordered. Residues Lys-213–Gly-222 are compositionally biased toward basic residues.

This sequence belongs to the UPF0329 family.

This chain is UPF0329 protein ECU07_1890/ECU10_0010, found in Encephalitozoon cuniculi (strain GB-M1) (Microsporidian parasite).